Here is a 282-residue protein sequence, read N- to C-terminus: Bis(5'-nucleosyl)-tetraphosphatase, symmetrical (282 aa).

It belongs to the Ap4A hydrolase family.

The enzyme catalyses P(1),P(4)-bis(5'-adenosyl) tetraphosphate + H2O = 2 ADP + 2 H(+). In terms of biological role, hydrolyzes diadenosine 5',5'''-P1,P4-tetraphosphate to yield ADP. This is Bis(5'-nucleosyl)-tetraphosphatase, symmetrical from Escherichia fergusonii (strain ATCC 35469 / DSM 13698 / CCUG 18766 / IAM 14443 / JCM 21226 / LMG 7866 / NBRC 102419 / NCTC 12128 / CDC 0568-73).